A 485-amino-acid chain; its full sequence is Glutamyl-tRNA(Gln) amidotransferase subunit A (485 aa).

Active-site charge relay system residues include Lys-79 and Ser-154. Ser-178 functions as the Acyl-ester intermediate in the catalytic mechanism.

The protein belongs to the amidase family. GatA subfamily. As to quaternary structure, heterotrimer of A, B and C subunits.

It carries out the reaction L-glutamyl-tRNA(Gln) + L-glutamine + ATP + H2O = L-glutaminyl-tRNA(Gln) + L-glutamate + ADP + phosphate + H(+). Its function is as follows. Allows the formation of correctly charged Gln-tRNA(Gln) through the transamidation of misacylated Glu-tRNA(Gln) in organisms which lack glutaminyl-tRNA synthetase. The reaction takes place in the presence of glutamine and ATP through an activated gamma-phospho-Glu-tRNA(Gln). This chain is Glutamyl-tRNA(Gln) amidotransferase subunit A, found in Geobacillus kaustophilus (strain HTA426).